Reading from the N-terminus, the 577-residue chain is Pentatricopeptide repeat-containing protein At1g63400 (577 aa).

PPR repeat units follow at residues 49–83 (GSGD…RPLP), 84–118 (SIFE…GISH), 119–153 (NLYT…GYEP), 154–188 (SIVT…GYRP), 189–223 (DTIT…GCQP), 224–258 (NLVT…KIEA), 259–293 (NVVI…GVRP), 294–328 (NVIT…KINP), 329–363 (NVVT…SIDP), 364–398 (DIFT…DCFP), 399–433 (NVVT…GLVG), 434–468 (NTVT…GVHP), 469–503 (NIMT…KMEP), 504–538 (TIYT…GVKP), and 539–573 (DVII…GPLP).

The protein belongs to the PPR family. P subfamily.

The chain is Pentatricopeptide repeat-containing protein At1g63400 from Arabidopsis thaliana (Mouse-ear cress).